We begin with the raw amino-acid sequence, 78 residues long: Large ribosomal subunit protein bL28 (78 aa).

The interval 1–30 is disordered; it reads MAAHCQVTGAQPGFGHSISHSHRRTKRRWN. The segment covering 19–30 has biased composition (basic residues); that stretch reads SHSHRRTKRRWN.

Belongs to the bacterial ribosomal protein bL28 family.

This Kocuria rhizophila (strain ATCC 9341 / DSM 348 / NBRC 103217 / DC2201) protein is Large ribosomal subunit protein bL28.